A 55-amino-acid polypeptide reads, in one-letter code: Spermatid nuclear transition protein 1 (55 aa).

Positions 1 to 42 are enriched in basic residues; it reads MSTSRKLKTHGMRRGKNRAPHKGVKRGGSKRKYRKSSLKSRK. The disordered stretch occupies residues 1–55; it reads MSTSRKLKTHGMRRGKNRAPHKGVKRGGSKRKYRKSSLKSRKRGDDASRNYRSHL. 3 positions are modified to phosphoserine: Ser36, Ser37, and Ser40.

It belongs to the nuclear transition protein 1 family. As to expression, testis.

The protein localises to the nucleus. Its subcellular location is the chromosome. Its function is as follows. Plays a key role in the replacement of histones to protamine in the elongating spermatids of mammals. In condensing spermatids, loaded onto the nucleosomes, where it promotes the recruitment and processing of protamines, which are responsible for histone eviction. The sequence is that of Spermatid nuclear transition protein 1 (Tnp1) from Rattus norvegicus (Rat).